The sequence spans 184 residues: dTTP/UTP pyrophosphatase (184 aa).

The active-site Proton acceptor is the Asp65.

This sequence belongs to the Maf family. YhdE subfamily. It depends on a divalent metal cation as a cofactor.

Its subcellular location is the cytoplasm. The enzyme catalyses dTTP + H2O = dTMP + diphosphate + H(+). The catalysed reaction is UTP + H2O = UMP + diphosphate + H(+). Nucleoside triphosphate pyrophosphatase that hydrolyzes dTTP and UTP. May have a dual role in cell division arrest and in preventing the incorporation of modified nucleotides into cellular nucleic acids. This Thermococcus onnurineus (strain NA1) protein is dTTP/UTP pyrophosphatase.